The primary structure comprises 328 residues: 4-hydroxythreonine-4-phosphate dehydrogenase (328 aa).

Thr-125 contributes to the substrate binding site. A divalent metal cation is bound by residues His-160, His-203, and His-269. Lys-277, Asn-286, and Arg-295 together coordinate substrate.

This sequence belongs to the PdxA family. Homodimer. A divalent metal cation serves as cofactor.

It is found in the cytoplasm. It catalyses the reaction 4-(phosphooxy)-L-threonine + NAD(+) = 3-amino-2-oxopropyl phosphate + CO2 + NADH. It participates in cofactor biosynthesis; pyridoxine 5'-phosphate biosynthesis; pyridoxine 5'-phosphate from D-erythrose 4-phosphate: step 4/5. Its function is as follows. Catalyzes the NAD(P)-dependent oxidation of 4-(phosphooxy)-L-threonine (HTP) into 2-amino-3-oxo-4-(phosphooxy)butyric acid which spontaneously decarboxylates to form 3-amino-2-oxopropyl phosphate (AHAP). This chain is 4-hydroxythreonine-4-phosphate dehydrogenase, found in Synechococcus sp. (strain RCC307).